The sequence spans 147 residues: Protein BUD31 homolog (147 aa).

The Nuclear localization signal motif lies at 8-12 (RRVRK).

The protein belongs to the BUD31 (G10) family. In terms of assembly, identified in the spliceosome C complex.

The protein resides in the nucleus. Involved in pre-mRNA splicing process. The protein is Protein BUD31 homolog of Caenorhabditis elegans.